Reading from the N-terminus, the 691-residue chain is Mediator of RNA polymerase II transcription subunit 17 (691 aa).

Residues 158-185 (KLESFDAAANKLLQSAQRLEEDIAAETK) are a coiled coil.

It belongs to the Mediator complex subunit 17 family. As to quaternary structure, component of the Mediator complex.

It localises to the nucleus. In terms of biological role, component of the Mediator complex, a coactivator involved in the regulated transcription of nearly all RNA polymerase II-dependent genes. Mediator functions as a bridge to convey information from gene-specific regulatory proteins to the basal RNA polymerase II transcription machinery. Mediator is recruited to promoters by direct interactions with regulatory proteins and serves as a scaffold for the assembly of a functional preinitiation complex with RNA polymerase II and the general transcription factors. The chain is Mediator of RNA polymerase II transcription subunit 17 (SRB4) from Coccidioides immitis (strain RS) (Valley fever fungus).